The primary structure comprises 77 residues: Defensin-B6 (77 aa).

Positions 1–20 (MKTLFFLSVFIFLLLHLSPG) are cleaved as a signal peptide. Cystine bridges form between cysteine 43-cysteine 70, cysteine 50-cysteine 64, and cysteine 54-cysteine 71.

It belongs to the beta-defensin family. Lowly expressed in spleen, kidney and lung.

The protein localises to the secreted. Its function is as follows. Has antimicrobial activity. In Ornithorhynchus anatinus (Duckbill platypus), this protein is Defensin-B6.